The primary structure comprises 146 residues: Acidic phospholipase A2 2 (146 aa).

Residues 1–21 form the signal peptide; the sequence is MTPAHLLILAAVCVSPLGASS. A propeptide spanning residues 22–27 is cleaved from the precursor; sequence SRPMPL. Cystine bridges form between Cys38–Cys98, Cys53–Cys145, Cys55–Cys71, Cys70–Cys126, Cys77–Cys119, Cys87–Cys112, and Cys105–Cys117. 3 residues coordinate Ca(2+): Tyr54, Gly56, and Gly58. His74 is an active-site residue. Asp75 is a Ca(2+) binding site. Asp120 is an active-site residue.

Belongs to the phospholipase A2 family. Group I subfamily. D49 sub-subfamily. Ca(2+) serves as cofactor. Expressed by the venom gland.

Its subcellular location is the secreted. The catalysed reaction is a 1,2-diacyl-sn-glycero-3-phosphocholine + H2O = a 1-acyl-sn-glycero-3-phosphocholine + a fatty acid + H(+). Functionally, PLA2 catalyzes the calcium-dependent hydrolysis of the 2-acyl groups in 3-sn-phosphoglycerides. The polypeptide is Acidic phospholipase A2 2 (Naja atra (Chinese cobra)).